The following is a 567-amino-acid chain: Periplasmic [NiFe] hydrogenase large subunit (567 aa).

Glutamate 62 contributes to the Mg(2+) binding site. Cysteine 81 and cysteine 84 together coordinate Ni(2+). Cysteine 84 is a Fe cation binding site. A Mg(2+)-binding site is contributed by leucine 498. Positions 546 and 549 each coordinate Ni(2+). Cysteine 549 provides a ligand contact to Fe cation. A Mg(2+)-binding site is contributed by histidine 552. The propeptide occupies 553-567; it reads VIDGHTNEVHKFRIL.

Belongs to the [NiFe]/[NiFeSe] hydrogenase large subunit family. In terms of assembly, heterodimer of a large and a small subunit. Ni(2+) serves as cofactor. It depends on Fe cation as a cofactor.

It is found in the periplasm. It carries out the reaction 2 Fe(III)-[cytochrome c3] + H2 = 2 Fe(II)-[cytochrome c3] + 2 H(+). In terms of biological role, catalyzes the reversible oxidoreduction of molecular hydrogen, in conjunction with a specific electron acceptor, cytochrome c3. This chain is Periplasmic [NiFe] hydrogenase large subunit (hydB), found in Nitratidesulfovibrio vulgaris (strain DSM 19637 / Miyazaki F) (Desulfovibrio vulgaris).